The chain runs to 288 residues: Light-independent protochlorophyllide reductase iron-sulfur ATP-binding protein (288 aa).

ATP-binding positions include 12–17 and Lys-41; that span reads GIGKST. Ser-16 contacts Mg(2+). [4Fe-4S] cluster contacts are provided by Cys-97 and Cys-131. 182 to 183 lines the ATP pocket; the sequence is NR.

The protein belongs to the NifH/BchL/ChlL family. In terms of assembly, homodimer. Protochlorophyllide reductase is composed of three subunits; ChlL, ChlN and ChlB. [4Fe-4S] cluster is required as a cofactor.

It carries out the reaction chlorophyllide a + oxidized 2[4Fe-4S]-[ferredoxin] + 2 ADP + 2 phosphate = protochlorophyllide a + reduced 2[4Fe-4S]-[ferredoxin] + 2 ATP + 2 H2O. The protein operates within porphyrin-containing compound metabolism; chlorophyll biosynthesis (light-independent). Functionally, component of the dark-operative protochlorophyllide reductase (DPOR) that uses Mg-ATP and reduced ferredoxin to reduce ring D of protochlorophyllide (Pchlide) to form chlorophyllide a (Chlide). This reaction is light-independent. The L component serves as a unique electron donor to the NB-component of the complex, and binds Mg-ATP. The protein is Light-independent protochlorophyllide reductase iron-sulfur ATP-binding protein of Picosynechococcus sp. (strain ATCC 27264 / PCC 7002 / PR-6) (Agmenellum quadruplicatum).